A 1004-amino-acid chain; its full sequence is Glycine dehydrogenase (decarboxylating), mitochondrial (1004 aa).

At Lys-738 the chain carries N6-(pyridoxal phosphate)lysine.

It belongs to the GcvP family. In terms of assembly, homodimer. Interacts with GCSH. The glycine cleavage system is composed of four proteins: P (GLDC), T (GCST), L (DLD) and H (GCSH). The cofactor is pyridoxal 5'-phosphate. In terms of tissue distribution, liver (at protein level).

The protein localises to the mitochondrion. The enzyme catalyses N(6)-[(R)-lipoyl]-L-lysyl-[glycine-cleavage complex H protein] + glycine + H(+) = N(6)-[(R)-S(8)-aminomethyldihydrolipoyl]-L-lysyl-[glycine-cleavage complex H protein] + CO2. Stimulated by lipoic acid. Inhibited in presence of methylamine. Functionally, the glycine cleavage system catalyzes the degradation of glycine. The P protein (GLDC) binds the alpha-amino group of glycine through its pyridoxal phosphate cofactor; CO(2) is released and the remaining methylamine moiety is then transferred to the lipoamide cofactor of the H protein (GCSH). The polypeptide is Glycine dehydrogenase (decarboxylating), mitochondrial (Gallus gallus (Chicken)).